The sequence spans 155 residues: 2-C-methyl-D-erythritol 2,4-cyclodiphosphate synthase (155 aa).

A divalent metal cation is bound by residues D8 and H10. Residues 8-10 and 34-35 each bind 4-CDP-2-C-methyl-D-erythritol 2-phosphate; these read DVH and HS. H42 is a binding site for a divalent metal cation. Residues 56-58, 61-65, 100-106, 132-135, F139, and K142 contribute to the 4-CDP-2-C-methyl-D-erythritol 2-phosphate site; these read DIG, FPDSD, AQKPKML, and TTEE.

It belongs to the IspF family. Homotrimer. The cofactor is a divalent metal cation.

The catalysed reaction is 4-CDP-2-C-methyl-D-erythritol 2-phosphate = 2-C-methyl-D-erythritol 2,4-cyclic diphosphate + CMP. It functions in the pathway isoprenoid biosynthesis; isopentenyl diphosphate biosynthesis via DXP pathway; isopentenyl diphosphate from 1-deoxy-D-xylulose 5-phosphate: step 4/6. Its function is as follows. Involved in the biosynthesis of isopentenyl diphosphate (IPP) and dimethylallyl diphosphate (DMAPP), two major building blocks of isoprenoid compounds. Catalyzes the conversion of 4-diphosphocytidyl-2-C-methyl-D-erythritol 2-phosphate (CDP-ME2P) to 2-C-methyl-D-erythritol 2,4-cyclodiphosphate (ME-CPP) with a corresponding release of cytidine 5-monophosphate (CMP). This Clostridium botulinum (strain ATCC 19397 / Type A) protein is 2-C-methyl-D-erythritol 2,4-cyclodiphosphate synthase.